Reading from the N-terminus, the 1379-residue chain is DNA-directed RNA polymerase subunit beta (1379 aa).

Belongs to the RNA polymerase beta chain family. The RNAP catalytic core consists of 2 alpha, 1 beta, 1 beta' and 1 omega subunit. When a sigma factor is associated with the core the holoenzyme is formed, which can initiate transcription.

It catalyses the reaction RNA(n) + a ribonucleoside 5'-triphosphate = RNA(n+1) + diphosphate. Functionally, DNA-dependent RNA polymerase catalyzes the transcription of DNA into RNA using the four ribonucleoside triphosphates as substrates. This chain is DNA-directed RNA polymerase subunit beta, found in Ruegeria sp. (strain TM1040) (Silicibacter sp.).